The following is a 94-amino-acid chain: MSEFCKPLLDILRHQGTCAALAFIMALLRARYHRKDFYRSLLDALMCAMLGGVAHELLQFLGLKADYSWLASVAIGYLGVDRIGNWLKKKTGKL.

The protein belongs to the lambda phage S protein family.

In terms of biological role, essential for lysis of the bacterial cell wall by disrupting the cell membrane, thereby giving hydrolytic enzymes access to the cell wall. The sequence is that of Putative lysis protein S (11) from Acyrthosiphon pisum secondary endosymbiont phage 1 (Bacteriophage APSE-1).